The following is a 747-amino-acid chain: Elongation factor G, mitochondrial (747 aa).

The N-terminal 16 residues, 1 to 16 (MSLIMRVLNGNLSLRL), are a transit peptide targeting the mitochondrion. The tr-type G domain maps to 42-319 (ERIRNIGISA…AIIDYLPNPG (278 aa)). Residues 51–58 (AHIDSGKT), 118–122 (DTPGH), and 172–175 (NKLD) each bind GTP.

Belongs to the TRAFAC class translation factor GTPase superfamily. Classic translation factor GTPase family. EF-G/EF-2 subfamily.

The protein localises to the mitochondrion. It participates in protein biosynthesis; polypeptide chain elongation. Functionally, mitochondrial GTPase that catalyzes the GTP-dependent ribosomal translocation step during translation elongation. During this step, the ribosome changes from the pre-translocational (PRE) to the post-translocational (POST) state as the newly formed A-site-bound peptidyl-tRNA and P-site-bound deacylated tRNA move to the P and E sites, respectively. Catalyzes the coordinated movement of the two tRNA molecules, the mRNA and conformational changes in the ribosome. Essential during development as it acts as a retrograde signal from mitochondria to the nucleus to slow down cell proliferation if mitochondrial energy output is low. This Drosophila grimshawi (Hawaiian fruit fly) protein is Elongation factor G, mitochondrial.